Reading from the N-terminus, the 415-residue chain is Serine/threonine transporter SstT (415 aa).

The next 8 helical transmembrane spans lie at 21–41, 45–65, 85–105, 142–162, 193–213, 217–237, 289–309, and 331–351; these read ILLGLAAGIILASLSTQAALA, LGTLFVGALKAVAPILVLVLV, FLYLIGTFSAALIAVVLSVLF, ALLNANYIGILVWAVGLGIAF, LGIFGLVASTLAETGFGALWG, LLMVLIGGMLLVALVVNPLIV, VAIPLGATINMAGAAITITVL, and VVASLCACGASGVAGGSLLLI.

The protein belongs to the dicarboxylate/amino acid:cation symporter (DAACS) (TC 2.A.23) family.

The protein localises to the cell inner membrane. The enzyme catalyses L-serine(in) + Na(+)(in) = L-serine(out) + Na(+)(out). It carries out the reaction L-threonine(in) + Na(+)(in) = L-threonine(out) + Na(+)(out). Involved in the import of serine and threonine into the cell, with the concomitant import of sodium (symport system). This chain is Serine/threonine transporter SstT, found in Pectobacterium atrosepticum (strain SCRI 1043 / ATCC BAA-672) (Erwinia carotovora subsp. atroseptica).